A 21-amino-acid chain; its full sequence is Cupiennin-6b (21 aa).

The residue at position 21 (Ser-21) is a Serine amide.

In terms of tissue distribution, expressed by the venom gland.

It is found in the secreted. The protein is Cupiennin-6b of Cupiennius salei (American wandering spider).